Consider the following 475-residue polypeptide: Ribulose bisphosphate carboxylase large chain (475 aa).

The propeptide occupies 1–2 (MS). N-acetylproline is present on Pro3. The residue at position 14 (Lys14) is an N6,N6,N6-trimethyllysine. Substrate is bound by residues Asn123 and Thr173. The active-site Proton acceptor is Lys175. Lys177 is a binding site for substrate. Lys201, Asp203, and Glu204 together coordinate Mg(2+). Residue Lys201 is modified to N6-carboxylysine. Catalysis depends on His294, which acts as the Proton acceptor. Arg295, His327, and Ser379 together coordinate substrate.

Belongs to the RuBisCO large chain family. Type I subfamily. Heterohexadecamer of 8 large chains and 8 small chains; disulfide-linked. The disulfide link is formed within the large subunit homodimers. Mg(2+) is required as a cofactor. In terms of processing, the disulfide bond which can form in the large chain dimeric partners within the hexadecamer appears to be associated with oxidative stress and protein turnover.

The protein localises to the plastid. The protein resides in the chloroplast. It carries out the reaction 2 (2R)-3-phosphoglycerate + 2 H(+) = D-ribulose 1,5-bisphosphate + CO2 + H2O. It catalyses the reaction D-ribulose 1,5-bisphosphate + O2 = 2-phosphoglycolate + (2R)-3-phosphoglycerate + 2 H(+). In terms of biological role, ruBisCO catalyzes two reactions: the carboxylation of D-ribulose 1,5-bisphosphate, the primary event in carbon dioxide fixation, as well as the oxidative fragmentation of the pentose substrate in the photorespiration process. Both reactions occur simultaneously and in competition at the same active site. The sequence is that of Ribulose bisphosphate carboxylase large chain from Spirogyra maxima (Green alga).